The sequence spans 122 residues: Putative protein adenylyltransferase MJ1547 (122 aa).

The short motif at 11 to 25 (GSYAKNEYTKRSDID) is the GSX(10)DXD motif element. The Mg(2+) site is built by Asp23, Asp25, and Asp48.

Belongs to the MntA antitoxin family. In terms of assembly, probably forms a complex with cognate toxin MJ1548. Requires Mg(2+) as cofactor.

The catalysed reaction is L-tyrosyl-[protein] + ATP = O-(5'-adenylyl)-L-tyrosyl-[protein] + diphosphate. It carries out the reaction O-(5'-adenylyl)-L-tyrosyl-[protein] + ATP = O-[5'-(adenylyl-(5'-&gt;3')-adenylyl)]-L-tyrosyl-[protein] + diphosphate. Its function is as follows. Probable antitoxin component of a putative type VII toxin-antitoxin (TA) system. Neutralizes cognate toxic MJ1548 by di-AMPylation. The chain is Putative protein adenylyltransferase MJ1547 from Methanocaldococcus jannaschii (strain ATCC 43067 / DSM 2661 / JAL-1 / JCM 10045 / NBRC 100440) (Methanococcus jannaschii).